The chain runs to 438 residues: Zinc finger protein 641 (438 aa).

Positions 1–53 (MQAEDRSQFGSAAEMLSEQTAALGTGWESMNVQLDGAEPQVERGSQEERPWRT) are disordered. Over residues 17–32 (SEQTAALGTGWESMNV) the composition is skewed to polar residues. The segment covering 40 to 51 (QVERGSQEERPW) has biased composition (basic and acidic residues). Positions 109 to 181 (VTIKDVSLCF…DPQDLEERDI (73 aa)) constitute a KRAB domain. The interval 171–265 (PDPQDLEERD…EMDSLLRPHT (95 aa)) is transactivation. A Phosphoserine modification is found at S191. C2H2-type zinc fingers lie at residues 264-286 (HTCP…QQTH), 292-314 (YSCL…QKTH), and 320-342 (SRCS…QRVH). The interval 345–367 (GKSCKGQEVGESPGTRKRQRAPP) is disordered. 2 C2H2-type zinc fingers span residues 372–394 (HVCT…WLTH) and 400–422 (FQCP…LLTH). Positions 418 to 438 (HLLTHQGQSPRNSWDRGTSVF) are disordered. Positions 422 to 438 (HQGQSPRNSWDRGTSVF) are enriched in polar residues. S426 is subject to Phosphoserine.

Belongs to the krueppel C2H2-type zinc-finger protein family. In terms of tissue distribution, highly expressed in skeletal muscle, moderate expression in heart, liver, and pancreas, lower expression in placenta, no expression seen in brain, lung, and kidney.

It is found in the nucleus. In terms of biological role, transcriptional activator. Activates transcriptional activities of SRE and AP-1. The polypeptide is Zinc finger protein 641 (ZNF641) (Homo sapiens (Human)).